Here is a 184-residue protein sequence, read N- to C-terminus: Probable RNA 2'-phosphotransferase (184 aa).

Belongs to the KptA/TPT1 family.

In terms of biological role, removes the 2'-phosphate from RNA via an intermediate in which the phosphate is ADP-ribosylated by NAD followed by a presumed transesterification to release the RNA and generate ADP-ribose 1''-2''-cyclic phosphate (APPR&gt;P). May function as an ADP-ribosylase. This Escherichia coli O9:H4 (strain HS) protein is Probable RNA 2'-phosphotransferase.